The following is a 1372-amino-acid chain: DNA-directed RNA polymerase subunit beta (1372 aa).

The protein belongs to the RNA polymerase beta chain family. The RNAP catalytic core consists of 2 alpha, 1 beta, 1 beta' and 1 omega subunit. When a sigma factor is associated with the core the holoenzyme is formed, which can initiate transcription.

It carries out the reaction RNA(n) + a ribonucleoside 5'-triphosphate = RNA(n+1) + diphosphate. Functionally, DNA-dependent RNA polymerase catalyzes the transcription of DNA into RNA using the four ribonucleoside triphosphates as substrates. This chain is DNA-directed RNA polymerase subunit beta, found in Nitratidesulfovibrio vulgaris (strain DP4) (Desulfovibrio vulgaris).